The primary structure comprises 190 residues: Nucleoside triphosphate pyrophosphatase (190 aa).

The active-site Proton acceptor is the aspartate 69.

The protein belongs to the Maf family. A divalent metal cation is required as a cofactor.

It is found in the cytoplasm. It carries out the reaction a ribonucleoside 5'-triphosphate + H2O = a ribonucleoside 5'-phosphate + diphosphate + H(+). The catalysed reaction is a 2'-deoxyribonucleoside 5'-triphosphate + H2O = a 2'-deoxyribonucleoside 5'-phosphate + diphosphate + H(+). Its function is as follows. Nucleoside triphosphate pyrophosphatase. May have a dual role in cell division arrest and in preventing the incorporation of modified nucleotides into cellular nucleic acids. In Helicobacter pylori (strain J99 / ATCC 700824) (Campylobacter pylori J99), this protein is Nucleoside triphosphate pyrophosphatase.